The primary structure comprises 160 residues: Cytochrome b6-f complex subunit 4 (160 aa).

The Cytoplasmic segment spans residues M1–D35. The helical transmembrane segment at L36–V56 threads the bilayer. Residues L57 to K94 are Lumenal, thylakoid-facing. The chain crosses the membrane as a helical span at residues L95–E115. The Cytoplasmic portion of the chain corresponds to N116 to T130. Residues T131–L151 form a helical membrane-spanning segment. Residues D152–F160 are Lumenal, thylakoid-facing.

It belongs to the cytochrome b family. PetD subfamily. The 4 large subunits of the cytochrome b6-f complex are cytochrome b6, subunit IV (17 kDa polypeptide, PetD), cytochrome f and the Rieske protein, while the 4 small subunits are PetG, PetL, PetM and PetN. The complex functions as a dimer.

The protein resides in the cellular thylakoid membrane. Its function is as follows. Component of the cytochrome b6-f complex, which mediates electron transfer between photosystem II (PSII) and photosystem I (PSI), cyclic electron flow around PSI, and state transitions. The sequence is that of Cytochrome b6-f complex subunit 4 from Mastigocladus laminosus (Fischerella sp.).